A 192-amino-acid chain; its full sequence is Xanthine phosphoribosyltransferase (192 aa).

Leucine 20 and asparagine 27 together coordinate xanthine. 5-phospho-alpha-D-ribose 1-diphosphate is bound at residue 128-132; it reads AQGEA. Residue lysine 156 participates in xanthine binding.

Belongs to the purine/pyrimidine phosphoribosyltransferase family. Xpt subfamily. In terms of assembly, homodimer.

The protein localises to the cytoplasm. The catalysed reaction is XMP + diphosphate = xanthine + 5-phospho-alpha-D-ribose 1-diphosphate. It functions in the pathway purine metabolism; XMP biosynthesis via salvage pathway; XMP from xanthine: step 1/1. Its function is as follows. Converts the preformed base xanthine, a product of nucleic acid breakdown, to xanthosine 5'-monophosphate (XMP), so it can be reused for RNA or DNA synthesis. The sequence is that of Xanthine phosphoribosyltransferase from Lactobacillus helveticus (strain DPC 4571).